The chain runs to 77 residues: Large ribosomal subunit protein uL29 (77 aa).

Belongs to the universal ribosomal protein uL29 family.

This Cutibacterium acnes (strain DSM 16379 / KPA171202) (Propionibacterium acnes) protein is Large ribosomal subunit protein uL29.